Consider the following 772-residue polypeptide: Polyribonucleotide nucleotidyltransferase (772 aa).

Residues D486 and D492 each coordinate Mg(2+). A KH domain is found at 553–612 (PRIETLQIDKSKIRDVIGTGGKVIREIVATTGAKVDIDDEGLIKISSSDLTQIEAAKNWI). In terms of domain architecture, S1 motif spans 622 to 690 (GKIYKGKVVN…QRGKVRLSMR (69 aa)). The segment at 695 to 772 (ETGAELEDTR…HMPAFLKSDD (78 aa)) is disordered. The span at 701 to 760 (EDTRPPREPREPRGDRGDRGDRGDRRGPRGDRGPRREGGDRGPRREGGDRPRRDRDDGPA) shows a compositional bias: basic and acidic residues.

Belongs to the polyribonucleotide nucleotidyltransferase family. It depends on Mg(2+) as a cofactor.

It localises to the cytoplasm. It carries out the reaction RNA(n+1) + phosphate = RNA(n) + a ribonucleoside 5'-diphosphate. Functionally, involved in mRNA degradation. Catalyzes the phosphorolysis of single-stranded polyribonucleotides processively in the 3'- to 5'-direction. The protein is Polyribonucleotide nucleotidyltransferase of Novosphingobium aromaticivorans (strain ATCC 700278 / DSM 12444 / CCUG 56034 / CIP 105152 / NBRC 16084 / F199).